The primary structure comprises 401 residues: UPF0242 protein CPn_0755/CP_1117/CPj0755/CpB0783 (401 aa).

This sequence belongs to the UPF0242 family.

The sequence is that of UPF0242 protein CPn_0755/CP_1117/CPj0755/CpB0783 from Chlamydia pneumoniae (Chlamydophila pneumoniae).